A 130-amino-acid polypeptide reads, in one-letter code: Small ribosomal subunit protein uS11c (130 aa).

The protein belongs to the universal ribosomal protein uS11 family. In terms of assembly, part of the 30S ribosomal subunit.

It localises to the plastid. The protein localises to the chloroplast. This is Small ribosomal subunit protein uS11c from Pinus thunbergii (Japanese black pine).